The primary structure comprises 299 residues: MTKIKIVVIVGPTAVGKTALGISLAKAFNGEIISGDSQQVYRQLDIGTAKATQEEQEAAVHHLIDIREVTESYSAYDFVQDAQKAISDIVSRGKLPIIVGGTGLYLQSLLEGYHLGGQVDQEAVKAYRNELEQLDDHDLYERLQVNNITIEQVNRRRAIRALELAQFADELENAETAYEPLIIGLNDDRQVIYDRINQRVDRMLENGLLEEAKWLYEHYPTVQASRGIGYKELFPYFVGEMTLAEASDQLKQNTRRFAKRQLTWFRNRMAVSFTAITAPDYPQVVHDRVRDFLGQKEKS.

11-18 (GPTAVGKT) contributes to the ATP binding site. Substrate is bound at residue 13-18 (TAVGKT). The tract at residues 36 to 39 (DSQQ) is interaction with substrate tRNA.

Belongs to the IPP transferase family. In terms of assembly, monomer. The cofactor is Mg(2+).

It carries out the reaction adenosine(37) in tRNA + dimethylallyl diphosphate = N(6)-dimethylallyladenosine(37) in tRNA + diphosphate. In terms of biological role, catalyzes the transfer of a dimethylallyl group onto the adenine at position 37 in tRNAs that read codons beginning with uridine, leading to the formation of N6-(dimethylallyl)adenosine (i(6)A). The polypeptide is tRNA dimethylallyltransferase (Streptococcus pyogenes serotype M18 (strain MGAS8232)).